The sequence spans 116 residues: ATP synthase lipid-binding protein, mitochondrial (116 aa).

A mitochondrion-targeting transit peptide spans 1–24; that stretch reads MYCQRLALPLTRSLLASRAPLALR. The chain crosses the membrane as a helical span at residues 57–77; it reads VGVAGSGAGIGNVFGALVIGY. Lys84 carries the N6,N6,N6-trimethyllysine modification. A helical transmembrane segment spans residues 92 to 112; the sequence is ILGFALSEAMGLFCLTMGFMI.

Belongs to the ATPase C chain family. As to quaternary structure, F-type ATPases have 2 components, CF(1) - the catalytic core - and CF(0) - the membrane proton channel. CF(1) has five subunits: alpha(3), beta(3), gamma(1), delta(1), epsilon(1). CF(0) has three main subunits: a, b and c. Trimethylated by ATPSCKMT at Lys-84. Methylation may be required for proper incorporation of the C subunit into the ATP synthase complex and mitochondrial respiration.

The protein localises to the mitochondrion membrane. In terms of biological role, mitochondrial membrane ATP synthase (F(1)F(0) ATP synthase or Complex V) produces ATP from ADP in the presence of a proton gradient across the membrane which is generated by electron transport complexes of the respiratory chain. F-type ATPases consist of two structural domains, F(1) - containing the extramembraneous catalytic core and F(0) - containing the membrane proton channel, linked together by a central stalk and a peripheral stalk. During catalysis, ATP synthesis in the catalytic domain of F(1) is coupled via a rotary mechanism of the central stalk subunits to proton translocation. Part of the complex F(0) domain. A homomeric c-ring of probably 10 subunits is part of the complex rotary element. The chain is ATP synthase lipid-binding protein, mitochondrial from Caenorhabditis briggsae.